The following is a 103-amino-acid chain: Pyrimidine/purine nucleoside phosphorylase (103 aa).

It belongs to the nucleoside phosphorylase PpnP family.

It catalyses the reaction a purine D-ribonucleoside + phosphate = a purine nucleobase + alpha-D-ribose 1-phosphate. It carries out the reaction adenosine + phosphate = alpha-D-ribose 1-phosphate + adenine. The catalysed reaction is cytidine + phosphate = cytosine + alpha-D-ribose 1-phosphate. The enzyme catalyses guanosine + phosphate = alpha-D-ribose 1-phosphate + guanine. It catalyses the reaction inosine + phosphate = alpha-D-ribose 1-phosphate + hypoxanthine. It carries out the reaction thymidine + phosphate = 2-deoxy-alpha-D-ribose 1-phosphate + thymine. The catalysed reaction is uridine + phosphate = alpha-D-ribose 1-phosphate + uracil. The enzyme catalyses xanthosine + phosphate = alpha-D-ribose 1-phosphate + xanthine. Functionally, catalyzes the phosphorolysis of diverse nucleosides, yielding D-ribose 1-phosphate and the respective free bases. Can use uridine, adenosine, guanosine, cytidine, thymidine, inosine and xanthosine as substrates. Also catalyzes the reverse reactions. This chain is Pyrimidine/purine nucleoside phosphorylase, found in Citrifermentans bemidjiense (strain ATCC BAA-1014 / DSM 16622 / JCM 12645 / Bem) (Geobacter bemidjiensis).